Reading from the N-terminus, the 334-residue chain is Fructose-1,6-bisphosphatase class 1 (334 aa).

Mg(2+) is bound by residues E92, D114, L116, and D117. Substrate-binding positions include 117 to 120 (DGSS) and N209. E281 serves as a coordination point for Mg(2+).

This sequence belongs to the FBPase class 1 family. Homotetramer. Mg(2+) is required as a cofactor.

The protein localises to the cytoplasm. It catalyses the reaction beta-D-fructose 1,6-bisphosphate + H2O = beta-D-fructose 6-phosphate + phosphate. Its pathway is carbohydrate biosynthesis; gluconeogenesis. The polypeptide is Fructose-1,6-bisphosphatase class 1 (Nitrosomonas eutropha (strain DSM 101675 / C91 / Nm57)).